The chain runs to 544 residues: MSIFIGGAWPYANGSLHLGHIASLLPGDILARYYRAKGENVLYVSGSDCNGTPIAIRAKQEGVTAKEIANKYHEEFERCFRNLGFTYDCYTRTDSEHHHETVQNVFLRLLEEGHIYKKTVEQAYCETCTQFLPDRYVEGVCPHCHEEARGDQCDACSAILDPLDLLEKKCKLCGSTPSIQETEHFYFALHTFQEQIKRAVEIAKQTGTWRDNAIQLTERYVKEGLLDRAVSRDLPIGVPIPVEGYEDKKIYVWIEAVTGYYSASKHWAEETGKDDREFWDSEAKTYYVHGKDNIPFHSVIWPAVLLGIGEGAIPRHIVSNEYLTVEKRKLSTSKNWAVWVPDILERYDPDSIRYFLTVNAPENRDTDFSWREFIYSHNSELLGAYGNFVNRTLKFIEKYYGGIMPKGSIDVELKDKIERLYKHVGEAIEQTKFKVALESIFDAVRFANKYFDERQPWKEREDDPVSCEETIYNCVYLIANFANLLEPFLPFSSERIRNTLSIVNRNWEPQHTLPTRIDSVKPLFERIDVKQIERELEKLYGAVK.

Residues 10-20 (PYANGSLHLGH) carry the 'HIGH' region motif. Residues cysteine 141, cysteine 144, cysteine 153, and cysteine 156 each contribute to the Zn(2+) site. The short motif at 329–333 (KLSTS) is the 'KMSKS' region element. Threonine 332 provides a ligand contact to ATP.

The protein belongs to the class-I aminoacyl-tRNA synthetase family. MetG type 1 subfamily. Monomer. It depends on Zn(2+) as a cofactor.

The protein localises to the cytoplasm. It carries out the reaction tRNA(Met) + L-methionine + ATP = L-methionyl-tRNA(Met) + AMP + diphosphate. In terms of biological role, is required not only for elongation of protein synthesis but also for the initiation of all mRNA translation through initiator tRNA(fMet) aminoacylation. The polypeptide is Methionine--tRNA ligase (Bacillus cereus (strain 03BB102)).